Here is a 361-residue protein sequence, read N- to C-terminus: Phosphoserine aminotransferase (361 aa).

Arg-43 is an L-glutamate binding site. Pyridoxal 5'-phosphate-binding positions include 77–78 (AS), Trp-103, Thr-153, Asp-173, and Gln-196. Residue Lys-197 is modified to N6-(pyridoxal phosphate)lysine. 238–239 (NT) is a binding site for pyridoxal 5'-phosphate.

This sequence belongs to the class-V pyridoxal-phosphate-dependent aminotransferase family. SerC subfamily. As to quaternary structure, homodimer. Pyridoxal 5'-phosphate serves as cofactor.

The protein resides in the cytoplasm. The enzyme catalyses O-phospho-L-serine + 2-oxoglutarate = 3-phosphooxypyruvate + L-glutamate. The catalysed reaction is 4-(phosphooxy)-L-threonine + 2-oxoglutarate = (R)-3-hydroxy-2-oxo-4-phosphooxybutanoate + L-glutamate. The protein operates within amino-acid biosynthesis; L-serine biosynthesis; L-serine from 3-phospho-D-glycerate: step 2/3. It participates in cofactor biosynthesis; pyridoxine 5'-phosphate biosynthesis; pyridoxine 5'-phosphate from D-erythrose 4-phosphate: step 3/5. In terms of biological role, catalyzes the reversible conversion of 3-phosphohydroxypyruvate to phosphoserine and of 3-hydroxy-2-oxo-4-phosphonooxybutanoate to phosphohydroxythreonine. The protein is Phosphoserine aminotransferase of Pseudomonas aeruginosa (strain LESB58).